The chain runs to 43 residues: Cytochrome b559 subunit beta (43 aa).

Residues 18–34 (WLAVHTLAVPSVFFLGA) traverse the membrane as a helical segment. His-22 is a heme binding site.

It belongs to the PsbE/PsbF family. As to quaternary structure, heterodimer of an alpha subunit and a beta subunit. PSII is composed of 1 copy each of membrane proteins PsbA, PsbB, PsbC, PsbD, PsbE, PsbF, PsbH, PsbI, PsbJ, PsbK, PsbL, PsbM, PsbT, PsbX, PsbY, PsbZ, Psb30/Ycf12, peripheral proteins PsbO, CyanoQ (PsbQ), PsbU, PsbV and a large number of cofactors. It forms dimeric complexes. Requires heme b as cofactor.

Its subcellular location is the cellular thylakoid membrane. Its function is as follows. This b-type cytochrome is tightly associated with the reaction center of photosystem II (PSII). PSII is a light-driven water:plastoquinone oxidoreductase that uses light energy to abstract electrons from H(2)O, generating O(2) and a proton gradient subsequently used for ATP formation. It consists of a core antenna complex that captures photons, and an electron transfer chain that converts photonic excitation into a charge separation. The polypeptide is Cytochrome b559 subunit beta (Picosynechococcus sp. (strain ATCC 27264 / PCC 7002 / PR-6) (Agmenellum quadruplicatum)).